The sequence spans 619 residues: Dihydroxy-acid dehydratase (619 aa).

Aspartate 81 provides a ligand contact to Mg(2+). Cysteine 122 provides a ligand contact to [2Fe-2S] cluster. 2 residues coordinate Mg(2+): aspartate 123 and lysine 124. N6-carboxylysine is present on lysine 124. Cysteine 195 contacts [2Fe-2S] cluster. Residue glutamate 494 participates in Mg(2+) binding. Serine 520 acts as the Proton acceptor in catalysis.

The protein belongs to the IlvD/Edd family. As to quaternary structure, homodimer. [2Fe-2S] cluster is required as a cofactor. Mg(2+) serves as cofactor.

It catalyses the reaction (2R)-2,3-dihydroxy-3-methylbutanoate = 3-methyl-2-oxobutanoate + H2O. The catalysed reaction is (2R,3R)-2,3-dihydroxy-3-methylpentanoate = (S)-3-methyl-2-oxopentanoate + H2O. It participates in amino-acid biosynthesis; L-isoleucine biosynthesis; L-isoleucine from 2-oxobutanoate: step 3/4. The protein operates within amino-acid biosynthesis; L-valine biosynthesis; L-valine from pyruvate: step 3/4. Its function is as follows. Functions in the biosynthesis of branched-chain amino acids. Catalyzes the dehydration of (2R,3R)-2,3-dihydroxy-3-methylpentanoate (2,3-dihydroxy-3-methylvalerate) into 2-oxo-3-methylpentanoate (2-oxo-3-methylvalerate) and of (2R)-2,3-dihydroxy-3-methylbutanoate (2,3-dihydroxyisovalerate) into 2-oxo-3-methylbutanoate (2-oxoisovalerate), the penultimate precursor to L-isoleucine and L-valine, respectively. This is Dihydroxy-acid dehydratase from Shewanella sp. (strain ANA-3).